We begin with the raw amino-acid sequence, 596 residues long: Chaperonin 60 subunit beta 2, chloroplastic (596 aa).

The N-terminal 50 residues, 1 to 50 (MASTFTATSSLGSLLAPNAIKLSSATSISSSSFGRRHNVCVRRSRPAIVC), are a transit peptide targeting the chloroplast. Serine 97 and serine 474 each carry phosphoserine. Positions 388–489 (TQEAVNKRVV…KDTLENDEEK (102 aa)) form a coiled coil.

It belongs to the chaperonin (HSP60) family. In terms of assembly, part of the Cpn60 complex composed of 7 alpha and 7 beta subunits. Can also form a complex composed of 14 beta subunits only. Both complexes show ATPase activity. The Cpn60 complex interacts with the Cpn10 complex. Interacts with RAB during heat stress.

The protein localises to the plastid. It is found in the chloroplast stroma. Functionally, involved in protein assisted folding. The chain is Chaperonin 60 subunit beta 2, chloroplastic (CPN60B2) from Arabidopsis thaliana (Mouse-ear cress).